The sequence spans 293 residues: Putative serine protease 42 (293 aa).

The first 26 residues, 1 to 26 (MSSGGGSRGLLAWLLLLQPWPGQNWA), serve as a signal peptide directing secretion. The segment at 33–60 (LPSPLLSEEGGENPEASPAPGPEAGPPL) is disordered. The Peptidase S1 domain occupies 80 to 293 (IVGGVDAEEG…IVSWGIGCGR (214 aa)). A disulfide bond links Cys105 and Cys121. The Charge relay system role is filled by His120. The N-linked (GlcNAc...) asparagine glycan is linked to Asn141. Asp166 acts as the Charge relay system in catalysis. Asn177 carries an N-linked (GlcNAc...) asparagine glycan. 3 disulfides stabilise this stretch: Cys200/Cys273, Cys232/Cys253, and Cys263/Cys291. Ser267 acts as the Charge relay system in catalysis. N-linked (GlcNAc...) asparagine glycosylation occurs at Asn276.

This sequence belongs to the peptidase S1 family.

The protein localises to the cytoplasm. It localises to the cell membrane. Functionally, plays a role in spermatogenesis. Involved in germ cell survival during meiosis. This is Putative serine protease 42 from Homo sapiens (Human).